A 360-amino-acid polypeptide reads, in one-letter code: DNA replication and repair protein RecF (360 aa).

ATP is bound at residue 30–37 (GHNGSGKT).

This sequence belongs to the RecF family.

The protein resides in the cytoplasm. The RecF protein is involved in DNA metabolism; it is required for DNA replication and normal SOS inducibility. RecF binds preferentially to single-stranded, linear DNA. It also seems to bind ATP. This chain is DNA replication and repair protein RecF, found in Shewanella denitrificans (strain OS217 / ATCC BAA-1090 / DSM 15013).